The chain runs to 177 residues: Acireductone dioxygenase (177 aa).

Fe(2+) is bound by residues His99, His101, Glu105, and His143. Ni(2+) is bound by residues His99, His101, Glu105, and His143.

It belongs to the acireductone dioxygenase (ARD) family. Monomer. Fe(2+) serves as cofactor. Requires Ni(2+) as cofactor.

The catalysed reaction is 1,2-dihydroxy-5-(methylsulfanyl)pent-1-en-3-one + O2 = 3-(methylsulfanyl)propanoate + CO + formate + 2 H(+). The enzyme catalyses 1,2-dihydroxy-5-(methylsulfanyl)pent-1-en-3-one + O2 = 4-methylsulfanyl-2-oxobutanoate + formate + 2 H(+). Its pathway is amino-acid biosynthesis; L-methionine biosynthesis via salvage pathway; L-methionine from S-methyl-5-thio-alpha-D-ribose 1-phosphate: step 5/6. Functionally, catalyzes 2 different reactions between oxygen and the acireductone 1,2-dihydroxy-3-keto-5-methylthiopentene (DHK-MTPene) depending upon the metal bound in the active site. Fe-containing acireductone dioxygenase (Fe-ARD) produces formate and 2-keto-4-methylthiobutyrate (KMTB), the alpha-ketoacid precursor of methionine in the methionine recycle pathway. Ni-containing acireductone dioxygenase (Ni-ARD) produces methylthiopropionate, carbon monoxide and formate, and does not lie on the methionine recycle pathway. This Leptospira borgpetersenii serovar Hardjo-bovis (strain L550) protein is Acireductone dioxygenase.